The primary structure comprises 671 residues: UvrABC system protein B (671 aa).

Residues 35–423 enclose the Helicase ATP-binding domain; that stretch reads KAIIENKKHQ…NHQVVQQIIR (389 aa). 48–55 provides a ligand contact to ATP; that stretch reads GATGTGKT. A Beta-hairpin motif is present at residues 101–124; it reads NFDFFQPEAYIPSKDLYIDKDSRQ. One can recognise a Helicase C-terminal domain in the interval 440 to 602; the sequence is QIDDIINEIH…IVPKTISKAI (163 aa). A UVR domain is found at 632-667; sequence QQTIDNLRQEMLQAAKELDFERAAILRDTIIELENE.

This sequence belongs to the UvrB family. Forms a heterotetramer with UvrA during the search for lesions. Interacts with UvrC in an incision complex.

The protein resides in the cytoplasm. The UvrABC repair system catalyzes the recognition and processing of DNA lesions. A damage recognition complex composed of 2 UvrA and 2 UvrB subunits scans DNA for abnormalities. Upon binding of the UvrA(2)B(2) complex to a putative damaged site, the DNA wraps around one UvrB monomer. DNA wrap is dependent on ATP binding by UvrB and probably causes local melting of the DNA helix, facilitating insertion of UvrB beta-hairpin between the DNA strands. Then UvrB probes one DNA strand for the presence of a lesion. If a lesion is found the UvrA subunits dissociate and the UvrB-DNA preincision complex is formed. This complex is subsequently bound by UvrC and the second UvrB is released. If no lesion is found, the DNA wraps around the other UvrB subunit that will check the other stand for damage. In Mycoplasma mycoides subsp. mycoides SC (strain CCUG 32753 / NCTC 10114 / PG1), this protein is UvrABC system protein B.